The chain runs to 295 residues: Phosphatidylserine decarboxylase proenzyme (295 aa).

Catalysis depends on charge relay system; for autoendoproteolytic cleavage activity residues aspartate 113, histidine 169, and serine 256. The active-site Schiff-base intermediate with substrate; via pyruvic acid; for decarboxylase activity is serine 256. At serine 256 the chain carries Pyruvic acid (Ser); by autocatalysis.

Belongs to the phosphatidylserine decarboxylase family. PSD-B subfamily. Prokaryotic type II sub-subfamily. As to quaternary structure, heterodimer of a large membrane-associated beta subunit and a small pyruvoyl-containing alpha subunit. It depends on pyruvate as a cofactor. Post-translationally, is synthesized initially as an inactive proenzyme. Formation of the active enzyme involves a self-maturation process in which the active site pyruvoyl group is generated from an internal serine residue via an autocatalytic post-translational modification. Two non-identical subunits are generated from the proenzyme in this reaction, and the pyruvate is formed at the N-terminus of the alpha chain, which is derived from the carboxyl end of the proenzyme. The autoendoproteolytic cleavage occurs by a canonical serine protease mechanism, in which the side chain hydroxyl group of the serine supplies its oxygen atom to form the C-terminus of the beta chain, while the remainder of the serine residue undergoes an oxidative deamination to produce ammonia and the pyruvoyl prosthetic group on the alpha chain. During this reaction, the Ser that is part of the protease active site of the proenzyme becomes the pyruvoyl prosthetic group, which constitutes an essential element of the active site of the mature decarboxylase.

The protein localises to the cell membrane. The enzyme catalyses a 1,2-diacyl-sn-glycero-3-phospho-L-serine + H(+) = a 1,2-diacyl-sn-glycero-3-phosphoethanolamine + CO2. The protein operates within phospholipid metabolism; phosphatidylethanolamine biosynthesis; phosphatidylethanolamine from CDP-diacylglycerol: step 2/2. Functionally, catalyzes the formation of phosphatidylethanolamine (PtdEtn) from phosphatidylserine (PtdSer). In Clostridium novyi (strain NT), this protein is Phosphatidylserine decarboxylase proenzyme.